The chain runs to 461 residues: Putative ankyrin repeat protein FPV218 (461 aa).

12 ANK repeats span residues 1–28, 31–61, 65–94, 96–116, 120–149, 153–182, 186–213, 217–248, 250–277, 281–312, 358–385, and 431–460; these read MLSLYYAINYKNRKMVERLLREGVHPDS, KGFYRPLVKSILLRDVDLVSILLQNGANPNN, ETVSPLAIAIKVNSPTIVSLLLDYNADTSL, PLYVSFPIIKVLVYHGIDVNV, ESRSFLHYAAKNDDVDTVISLILHGANVNV, KGLSPLHHAVSKKTTLTAKILLENGARVNI, LGRLPLHLGANTYEMVKLLIDYGSPIDI, NGSTPLHYAIWKSSLDTIRLLVNVSTINALDN, CNSPLHYIILSETEILVELLLRGADITI, CGNTPLDILCKLRIKKLDNIKAIISNAFLMRE, NGPTILDVCTDKVHFLHRLVNARDNVQY, and LPYELKHYIIEYINIEFIKSLLEHTNLKNK.

The protein is Putative ankyrin repeat protein FPV218 of Fowlpox virus (strain NVSL) (FPV).